Here is a 195-residue protein sequence, read N- to C-terminus: Thymidine kinase (195 aa).

Residues 15–22 (GSMFSGKS) and 88–91 (DEVQ) contribute to the ATP site. E89 functions as the Proton acceptor in the catalytic mechanism. Zn(2+)-binding residues include C145, C148, C183, and C186.

The protein belongs to the thymidine kinase family. In terms of assembly, homotetramer.

The protein localises to the cytoplasm. It carries out the reaction thymidine + ATP = dTMP + ADP + H(+). The protein is Thymidine kinase of Bacillus cereus (strain AH187).